Here is a 39-residue protein sequence, read N- to C-terminus: Photosystem II reaction center protein J (39 aa).

Residues leucine 9–tyrosine 29 form a helical membrane-spanning segment.

The protein belongs to the PsbJ family. As to quaternary structure, PSII is composed of 1 copy each of membrane proteins PsbA, PsbB, PsbC, PsbD, PsbE, PsbF, PsbH, PsbI, PsbJ, PsbK, PsbL, PsbM, PsbT, PsbY, PsbZ, Psb30/Ycf12, at least 3 peripheral proteins of the oxygen-evolving complex and a large number of cofactors. It forms dimeric complexes.

The protein localises to the plastid. The protein resides in the chloroplast thylakoid membrane. In terms of biological role, one of the components of the core complex of photosystem II (PSII). PSII is a light-driven water:plastoquinone oxidoreductase that uses light energy to abstract electrons from H(2)O, generating O(2) and a proton gradient subsequently used for ATP formation. It consists of a core antenna complex that captures photons, and an electron transfer chain that converts photonic excitation into a charge separation. The sequence is that of Photosystem II reaction center protein J from Cyanidium caldarium (Red alga).